We begin with the raw amino-acid sequence, 698 residues long: Probable microcin-H47 secretion/processing ATP-binding protein MchF (698 aa).

The Peptidase C39 domain maps to 26–145 (QTETAECGLA…RYFTGIALEV (120 aa)). Cys-32 is an active-site residue. Transmembrane regions (helical) follow at residues 33–53 (GLAC…LISL), 90–110 (LGAL…VVLV), 289–311 (TCVV…MLLY), 315–337 (LTWI…YGYY), and 397–417 (LLFG…ILWL). Residues 176 to 458 (LAKIFCLSVV…LTSFLLQLRI (283 aa)) form the ABC transmembrane type-1 domain. Residues 492–698 (LETTDLSYRY…LRTVDRIISI (207 aa)) form the ABC transporter domain. 526 to 533 (GASGAGKT) is an ATP binding site.

Belongs to the ABC transporter superfamily.

The protein localises to the cell membrane. In terms of biological role, probably involved, in conjunction with MchE, in the secretion of microcin H47. This Escherichia coli protein is Probable microcin-H47 secretion/processing ATP-binding protein MchF (mchF).